Here is a 168-residue protein sequence, read N- to C-terminus: Diphosphoinositol polyphosphate phosphohydrolase 1 (168 aa).

N-acetylmethionine is present on M1. Residues R10, 18-20 (KKR), and 39-41 (SSR) contribute to the substrate site. The region spanning 17 to 142 (YKKRAACLCF…KPVQASYFEA (126 aa)) is the Nudix hydrolase domain. The Mg(2+) site is built by G50 and E66. The short motif at 51-72 (GGMEPEEEPSVAAVREVCEEAG) is the Nudix box element. The active-site Proton acceptor is E69. Residue E70 participates in Mg(2+) binding. Residues 89-91 (RKH), R115, and K133 contribute to the substrate site.

It belongs to the Nudix hydrolase family. DIPP subfamily. In terms of assembly, monomer. Mg(2+) serves as cofactor. It depends on Mn(2+) as a cofactor. The cofactor is Zn(2+).

It localises to the cytoplasm. Its subcellular location is the nucleus. It catalyses the reaction diphospho-myo-inositol polyphosphate + H2O = myo-inositol polyphosphate + phosphate.. The enzyme catalyses 5-diphospho-1D-myo-inositol 1,2,3,4,6-pentakisphosphate + H2O = 1D-myo-inositol hexakisphosphate + phosphate + H(+). It carries out the reaction 3,5-bis(diphospho)-1D-myo-inositol 1,2,4,6-tetrakisphosphate + H2O = 3-diphospho-1D-myo-inositol 1,2,4,5,6-pentakisphosphate + phosphate + 2 H(+). The catalysed reaction is [phosphate](n+1) + n H2O = (n+1) phosphate + n H(+). It catalyses the reaction P(1),P(5)-bis(5'-adenosyl) pentaphosphate + H2O = ADP + ATP + 2 H(+). The enzyme catalyses P(1),P(6)-bis(5'-adenosyl) hexaphosphate + H2O = 2 ATP + 2 H(+). It carries out the reaction P(1),P(4)-bis(5'-adenosyl) tetraphosphate + H2O = AMP + ATP + 2 H(+). The catalysed reaction is a 5'-end (N(7)-methyl 5'-triphosphoguanosine)-ribonucleoside in mRNA + H2O = N(7)-methyl-GMP + a 5'-end diphospho-ribonucleoside in mRNA + 2 H(+). It catalyses the reaction a 5'-end (N(7)-methyl 5'-triphosphoguanosine)-ribonucleoside in mRNA + H2O = N(7)-methyl-GDP + a 5'-end phospho-ribonucleoside in mRNA + 2 H(+). With respect to regulation, diphosphoinositol polyphosphate phosphohydrolase is inhibited by fluoride and InsP6. Functionally, cleaves a beta-phosphate from the diphosphate groups in PP-InsP5 (diphosphoinositol pentakisphosphate) and [PP]2-InsP4 (bisdiphosphoinositol tetrakisphosphate), suggesting that it may play a role in signal transduction. InsP6 (inositol hexakisphosphate) is not a substrate. Acts as a negative regulator of the ERK1/2 pathway. Also able to catalyze the hydrolysis of dinucleoside oligophosphates, with diadenosine 5',5'''-P1,P6-hexaphosphate (Ap6A) and diadenosine 5',5'''- P1,P5-pentaphosphate (Ap5A) being the preferred substrates. The major reaction products are ADP and p4a from Ap6A and ADP and ATP from Ap5A. Also able to hydrolyze 5- phosphoribose 1-diphosphate. Acts as a decapping enzyme that can hydrolyze both monomethylated and unmethylated capped RNAs. Hydrolyzes monomethylated capped RNA after both the alpha- and beta-phosphates generating m7GMP + ppRNA and m7GDP + pRNA. Modulates the stability of a subset of mRNAs implicated in cell motility. Divalent cations zinc, magnesium and manganese determine its substrate specificity. Exhibits endopolyphosphatase activity in the presence of zinc ions. Exhibits diphosphoinositol polyphosphate phosphohydrolase in the presence of magnesium ions and diadenosine hexaphosphate hydrolase activity in the presence of manganese ions. Plays an important role in limiting DNA damage and maintaining cell survival upon oxidative stress via its endopolyphosphatase activity. The chain is Diphosphoinositol polyphosphate phosphohydrolase 1 from Rattus norvegicus (Rat).